Consider the following 420-residue polypeptide: Glucose-1-phosphate adenylyltransferase (420 aa).

Alpha-D-glucose 1-phosphate is bound by residues Tyr-107, Gly-173, 188-189 (EK), and Ser-206.

It belongs to the bacterial/plant glucose-1-phosphate adenylyltransferase family. In terms of assembly, homotetramer.

The catalysed reaction is alpha-D-glucose 1-phosphate + ATP + H(+) = ADP-alpha-D-glucose + diphosphate. The protein operates within glycan biosynthesis; glycogen biosynthesis. Involved in the biosynthesis of ADP-glucose, a building block required for the elongation reactions to produce glycogen. Catalyzes the reaction between ATP and alpha-D-glucose 1-phosphate (G1P) to produce pyrophosphate and ADP-Glc. The protein is Glucose-1-phosphate adenylyltransferase of Shewanella sp. (strain MR-4).